The sequence spans 356 residues: Inositol monophosphatase 3 (356 aa).

Residues 11–31 traverse the membrane as a helical segment; that stretch reads LGIGVFCLLGLGVLYHVYSGF. Positions 127, 167, 169, 170, and 293 each coordinate Mg(2+). Glu-127 contributes to the substrate binding site. Substrate is bound by residues 169–172 and Asp-293; that span reads LDAT.

The protein belongs to the inositol monophosphatase superfamily. It depends on Mg(2+) as a cofactor.

It localises to the membrane. It catalyses the reaction a myo-inositol phosphate + H2O = myo-inositol + phosphate. It functions in the pathway polyol metabolism; myo-inositol biosynthesis; myo-inositol from D-glucose 6-phosphate: step 2/2. The protein is Inositol monophosphatase 3 (bpnt2) of Xenopus tropicalis (Western clawed frog).